The sequence spans 280 residues: BURP domain protein USPL1 (280 aa).

The signal sequence occupies residues 1-24 (MASTFRLSISFLTLILFSLWVVEA). The BURP domain occupies 58-280 (YFTLNDLKLG…PLDNIVWVTK (223 aa)).

In terms of tissue distribution, expressed in cotyledons, radicle, floral buds, open flowers, roots and developing seeds, but not in leaves. Highly expressed in the root tips. Detected in young leaves, hypocotyls, stems and mature seed funiculum.

It is found in the protein storage vacuole. It localises to the golgi apparatus. The protein localises to the golgi stack. Its subcellular location is the trans-Golgi network. The protein resides in the prevacuolar compartment. In terms of biological role, associated with the protein storage vacuole formation. This Arabidopsis thaliana (Mouse-ear cress) protein is BURP domain protein USPL1.